The chain runs to 435 residues: 5-methylthioadenosine/S-adenosylhomocysteine deaminase (435 aa).

Zn(2+) is bound by residues His-65 and His-67. Glu-94, Arg-150, and His-189 together coordinate substrate. Zn(2+) is bound at residue His-216. 2 residues coordinate substrate: Glu-219 and Asp-304. Asp-304 lines the Zn(2+) pocket.

The protein belongs to the metallo-dependent hydrolases superfamily. MTA/SAH deaminase family. It depends on Zn(2+) as a cofactor.

The enzyme catalyses S-adenosyl-L-homocysteine + H2O + H(+) = S-inosyl-L-homocysteine + NH4(+). It catalyses the reaction S-methyl-5'-thioadenosine + H2O + H(+) = S-methyl-5'-thioinosine + NH4(+). In terms of biological role, catalyzes the deamination of 5-methylthioadenosine and S-adenosyl-L-homocysteine into 5-methylthioinosine and S-inosyl-L-homocysteine, respectively. Is also able to deaminate adenosine. In Bacillus anthracis (strain A0248), this protein is 5-methylthioadenosine/S-adenosylhomocysteine deaminase.